The sequence spans 334 residues: S-adenosylmethionine decarboxylase proenzyme 2 (334 aa).

Residue F7 participates in substrate binding. Active-site residues include E8 and E11. E67 provides a ligand contact to substrate. S68 functions as the Schiff-base intermediate with substrate; via pyruvic acid in the catalytic mechanism. S68 carries the post-translational modification Pyruvic acid (Ser); by autocatalysis. Residue C82 is the Proton donor; for catalytic activity of the active site. F223 lines the substrate pocket. Residues S229 and H243 each act as proton acceptor; for processing activity in the active site. E247 lines the substrate pocket. S298 is subject to Phosphoserine.

It belongs to the eukaryotic AdoMetDC family. Heterotetramer of two alpha and two beta chains. The cofactor is pyruvate. Is synthesized initially as an inactive proenzyme. Formation of the active enzyme involves a self-maturation process in which the active site pyruvoyl group is generated from an internal serine residue via an autocatalytic post-translational modification. Two non-identical subunits are generated from the proenzyme in this reaction, and the pyruvate is formed at the N-terminus of the alpha chain, which is derived from the carboxyl end of the proenzyme. The post-translation cleavage follows an unusual pathway, termed non-hydrolytic serinolysis, in which the side chain hydroxyl group of the serine supplies its oxygen atom to form the C-terminus of the beta chain, while the remainder of the serine residue undergoes an oxidative deamination to produce ammonia and the pyruvoyl group blocking the N-terminus of the alpha chain.

The catalysed reaction is S-adenosyl-L-methionine + H(+) = S-adenosyl 3-(methylsulfanyl)propylamine + CO2. It functions in the pathway amine and polyamine biosynthesis; S-adenosylmethioninamine biosynthesis; S-adenosylmethioninamine from S-adenosyl-L-methionine: step 1/1. Its function is as follows. Essential for biosynthesis of the polyamines spermidine and spermine. Promotes maintenance and self-renewal of embryonic stem cells, by maintaining spermine levels. This chain is S-adenosylmethionine decarboxylase proenzyme 2 (Amd2), found in Mus spretus (Western Mediterranean mouse).